The sequence spans 66 residues: MSETNKNAFQAGQTAGKAEEKSNVLLDKAKDAAAGAGAGAQQAGKSVSDAAAGGVNFVKDKTGLNK.

The segment covering 1 to 13 (MSETNKNAFQAGQ) has biased composition (polar residues). The segment at 1–52 (MSETNKNAFQAGQTAGKAEEKSNVLLDKAKDAAAGAGAGAQQAGKSVSDAAA) is disordered. The segment covering 17–31 (KAEEKSNVLLDKAKD) has biased composition (basic and acidic residues). Repeats lie at residues 31 to 35 (DAAAG) and 49 to 53 (DAAAG). Residues 32–45 (AAAGAGAGAQQAGK) are compositionally biased toward low complexity.

This Arabidopsis thaliana (Mouse-ear cress) protein is Stress-induced protein KIN1 (KIN1).